We begin with the raw amino-acid sequence, 351 residues long: Synaptonemal complex central element protein 1 (351 aa).

The span at 1–10 (MAGRSLTSKA) shows a compositional bias: polar residues. Disordered stretches follow at residues 1 to 31 (MAGRSLTSKAEPTAGAVDRAEKAGGQDTSSQ) and 267 to 351 (KCQQ…KELF). The stretch at 52–290 (RVEVLINRIN…ELEKHGMQVP (239 aa)) forms a coiled coil.

It belongs to the SYCE family. In terms of assembly, homodimer. Found in a complex with SYCP1 and SYCE2. Interacts with SYCP1, SYCE2 and SYCE3. Interacts with SIX6OS1.

Its subcellular location is the nucleus. The protein resides in the chromosome. Functionally, major component of the transverse central element of synaptonemal complexes (SCS), formed between homologous chromosomes during meiotic prophase. Requires SYCP1 in order to be incorporated into the central element. May have a role in the synaptonemal complex assembly, stabilization and recombination. The polypeptide is Synaptonemal complex central element protein 1 (SYCE1) (Homo sapiens (Human)).